Here is a 666-residue protein sequence, read N- to C-terminus: Neopullulanase 1 (666 aa).

An N-terminal signal peptide occupies residues 1–29 (MIKLLKPMSLSILLVFILSFSFPFPTAKA). The Ca(2+) site is built by Ala31, Asp33, Asn35, Asp71, Asp125, Asn174, Asp176, Asn179, Asp180, Gly216, and Asp218. His296 provides a ligand contact to substrate. 5 residues coordinate Ca(2+): Asp305, Asn309, Phe310, Ser312, and Glu317. Arg383 lines the substrate pocket. Catalysis depends on Asp385, which acts as the Nucleophile. The active-site Proton donor is Glu425. Substrate is bound by residues 500–501 (HD), Asp545, and Arg549.

It belongs to the glycosyl hydrolase 13 family. The cofactor is Ca(2+).

It is found in the secreted. The catalysed reaction is Hydrolysis of pullulan to panose (6-alpha-D-glucosylmaltose).. Its function is as follows. Endohydrolysis of 1,4-alpha-glucosidic linkages in pullulan to form panose. Also hydrolyzes cyclodextrins. This chain is Neopullulanase 1 (tvaI), found in Thermoactinomyces vulgaris.